Reading from the N-terminus, the 94-residue chain is Large ribosomal subunit protein bL25 (94 aa).

It belongs to the bacterial ribosomal protein bL25 family. Part of the 50S ribosomal subunit; part of the 5S rRNA/L5/L18/L25 subcomplex. Contacts the 5S rRNA. Binds to the 5S rRNA independently of L5 and L18.

In terms of biological role, this is one of the proteins that binds to the 5S RNA in the ribosome where it forms part of the central protuberance. The polypeptide is Large ribosomal subunit protein bL25 (Escherichia coli O6:K15:H31 (strain 536 / UPEC)).